Reading from the N-terminus, the 91-residue chain is Small ribosomal subunit protein uS19 (91 aa).

This sequence belongs to the universal ribosomal protein uS19 family.

Functionally, protein S19 forms a complex with S13 that binds strongly to the 16S ribosomal RNA. This chain is Small ribosomal subunit protein uS19, found in Afipia carboxidovorans (strain ATCC 49405 / DSM 1227 / KCTC 32145 / OM5) (Oligotropha carboxidovorans).